A 292-amino-acid chain; its full sequence is Ribonuclease Z (292 aa).

His-60, His-62, Asp-64, His-65, His-132, Asp-200, and His-256 together coordinate Zn(2+). Asp-64 acts as the Proton acceptor in catalysis.

Belongs to the RNase Z family. Homodimer. Requires Zn(2+) as cofactor.

The catalysed reaction is Endonucleolytic cleavage of RNA, removing extra 3' nucleotides from tRNA precursor, generating 3' termini of tRNAs. A 3'-hydroxy group is left at the tRNA terminus and a 5'-phosphoryl group is left at the trailer molecule.. Functionally, zinc phosphodiesterase, which displays some tRNA 3'-processing endonuclease activity. Probably involved in tRNA maturation, by removing a 3'-trailer from precursor tRNA. In Sulfolobus acidocaldarius (strain ATCC 33909 / DSM 639 / JCM 8929 / NBRC 15157 / NCIMB 11770), this protein is Ribonuclease Z.